Reading from the N-terminus, the 152-residue chain is 3-hydroxyacyl-[acyl-carrier-protein] dehydratase FabZ (152 aa).

The active site involves His54.

Belongs to the thioester dehydratase family. FabZ subfamily.

The protein localises to the cytoplasm. The enzyme catalyses a (3R)-hydroxyacyl-[ACP] = a (2E)-enoyl-[ACP] + H2O. In terms of biological role, involved in unsaturated fatty acids biosynthesis. Catalyzes the dehydration of short chain beta-hydroxyacyl-ACPs and long chain saturated and unsaturated beta-hydroxyacyl-ACPs. In Roseobacter denitrificans (strain ATCC 33942 / OCh 114) (Erythrobacter sp. (strain OCh 114)), this protein is 3-hydroxyacyl-[acyl-carrier-protein] dehydratase FabZ.